The sequence spans 125 residues: Holo-[acyl-carrier-protein] synthase (125 aa).

Asp-8 and Glu-57 together coordinate Mg(2+).

Belongs to the P-Pant transferase superfamily. AcpS family. Mg(2+) is required as a cofactor.

The protein localises to the cytoplasm. The enzyme catalyses apo-[ACP] + CoA = holo-[ACP] + adenosine 3',5'-bisphosphate + H(+). In terms of biological role, transfers the 4'-phosphopantetheine moiety from coenzyme A to a Ser of acyl-carrier-protein. The protein is Holo-[acyl-carrier-protein] synthase of Neisseria gonorrhoeae (strain ATCC 700825 / FA 1090).